An 85-amino-acid polypeptide reads, in one-letter code: MAKSLTAAELRGYSVKELTEKLKEAKEELFNLRFQAATGQLDNNSRLRIVKREIARIYTVLREHELGIMPLAAEESADKAKEAAE.

This sequence belongs to the universal ribosomal protein uL29 family.

This is Large ribosomal subunit protein uL29 from Thermobifida fusca (strain YX).